Here is a 419-residue protein sequence, read N- to C-terminus: MDKFKIRGGQPLSGSVTISGAKNAALPILMASLLPSEKITLSNVPDLHDVDTTLELLDCLGISHSNLNNNSVCIDPTTLNHFKAPYDLVKTMRASILVLGPLLAKTGKAEVSLPGGCAIGARPVNLHIEGLRKMGAHIDVENGYIKASVEGRLQGAEILLDTVSVTGTENLMMAAVLAEGETVIENAAREPEVIDLANFLNSLGANVRDAGSDTIHITGVNKLHGGEYSVMPDRIETGTFLVAALATGGSVRCEKTDPASLDAVLKKLEEAGATIDKGDNWIAIQSHGRPKAVNIITAPHPAFPTDMQAQFCALNAIAEGTAGIRETIFENRFMHIPELRRMGANVESEGNTALCHGVDELTGAEVMCTDLRASASLVIAGLVATGETVVERIYHIDRGYEGIEKKLQGLGADIERVTA.

22 to 23 contributes to the phosphoenolpyruvate binding site; that stretch reads KN. Residue R93 coordinates UDP-N-acetyl-alpha-D-glucosamine. C117 acts as the Proton donor in catalysis. A 2-(S-cysteinyl)pyruvic acid O-phosphothioketal modification is found at C117. Residues D306 and I328 each contribute to the UDP-N-acetyl-alpha-D-glucosamine site.

It belongs to the EPSP synthase family. MurA subfamily.

The protein resides in the cytoplasm. It catalyses the reaction phosphoenolpyruvate + UDP-N-acetyl-alpha-D-glucosamine = UDP-N-acetyl-3-O-(1-carboxyvinyl)-alpha-D-glucosamine + phosphate. Its pathway is cell wall biogenesis; peptidoglycan biosynthesis. In terms of biological role, cell wall formation. Adds enolpyruvyl to UDP-N-acetylglucosamine. The chain is UDP-N-acetylglucosamine 1-carboxyvinyltransferase from Idiomarina loihiensis (strain ATCC BAA-735 / DSM 15497 / L2-TR).